We begin with the raw amino-acid sequence, 634 residues long: Factor of DNA methylation 5 (634 aa).

A coiled-coil region spans residues 254–469 (IVVDDLANKI…EDTNSALMVK (216 aa)).

In terms of biological role, acts in association with FDM3 and FDM4 for RNA-directed DNA methylation (RdDM). The protein is Factor of DNA methylation 5 of Arabidopsis thaliana (Mouse-ear cress).